The following is a 163-amino-acid chain: Urease accessory protein UreE (163 aa).

Residues 134–163 (EAGAYGGGHRHHHDDDAPSIRQPARLRIHE) form a disordered region.

It belongs to the UreE family.

It localises to the cytoplasm. Its function is as follows. Involved in urease metallocenter assembly. Binds nickel. Probably functions as a nickel donor during metallocenter assembly. The protein is Urease accessory protein UreE of Methylobacillus flagellatus (strain ATCC 51484 / DSM 6875 / VKM B-1610 / KT).